The chain runs to 62 residues: Protein DsrB (62 aa).

It belongs to the DsrB family.

This Escherichia fergusonii (strain ATCC 35469 / DSM 13698 / CCUG 18766 / IAM 14443 / JCM 21226 / LMG 7866 / NBRC 102419 / NCTC 12128 / CDC 0568-73) protein is Protein DsrB.